The chain runs to 378 residues: 3-dehydroquinate synthase (378 aa).

NAD(+) contacts are provided by residues 115–119 (GVVGD), 139–140 (TS), K152, and K161. Residues E194, H256, and H275 each coordinate Zn(2+).

The protein belongs to the sugar phosphate cyclases superfamily. Dehydroquinate synthase family. Co(2+) is required as a cofactor. The cofactor is Zn(2+). Requires NAD(+) as cofactor.

Its subcellular location is the cytoplasm. The catalysed reaction is 7-phospho-2-dehydro-3-deoxy-D-arabino-heptonate = 3-dehydroquinate + phosphate. It participates in metabolic intermediate biosynthesis; chorismate biosynthesis; chorismate from D-erythrose 4-phosphate and phosphoenolpyruvate: step 2/7. Functionally, catalyzes the conversion of 3-deoxy-D-arabino-heptulosonate 7-phosphate (DAHP) to dehydroquinate (DHQ). This chain is 3-dehydroquinate synthase, found in Brucella suis (strain ATCC 23445 / NCTC 10510).